The chain runs to 544 residues: Chaperonin GroEL 1 (544 aa).

ATP contacts are provided by residues 30 to 33 (TLGP), K51, 87 to 91 (DGTTT), G415, and D494.

It belongs to the chaperonin (HSP60) family. In terms of assembly, forms a cylinder of 14 subunits composed of two heptameric rings stacked back-to-back. Interacts with the co-chaperonin GroES.

It is found in the cytoplasm. It catalyses the reaction ATP + H2O + a folded polypeptide = ADP + phosphate + an unfolded polypeptide.. In terms of biological role, together with its co-chaperonin GroES, plays an essential role in assisting protein folding. The GroEL-GroES system forms a nano-cage that allows encapsulation of the non-native substrate proteins and provides a physical environment optimized to promote and accelerate protein folding. The chain is Chaperonin GroEL 1 from Syntrophus aciditrophicus (strain SB).